Consider the following 318-residue polypeptide: Methionyl-tRNA formyltransferase (318 aa).

112–115 provides a ligand contact to (6S)-5,6,7,8-tetrahydrofolate; that stretch reads SILP.

This sequence belongs to the Fmt family.

It carries out the reaction L-methionyl-tRNA(fMet) + (6R)-10-formyltetrahydrofolate = N-formyl-L-methionyl-tRNA(fMet) + (6S)-5,6,7,8-tetrahydrofolate + H(+). In terms of biological role, attaches a formyl group to the free amino group of methionyl-tRNA(fMet). The formyl group appears to play a dual role in the initiator identity of N-formylmethionyl-tRNA by promoting its recognition by IF2 and preventing the misappropriation of this tRNA by the elongation apparatus. This is Methionyl-tRNA formyltransferase from Shewanella sp. (strain MR-4).